We begin with the raw amino-acid sequence, 371 residues long: Regulatory protein RapK (371 aa).

TPR repeat units follow at residues 7-42 (EVVA…FDEM), 93-130 (EYNF…IPDE), 175-208 (ATST…AKET), 215-248 (AQLF…ESWL), 254-290 (INSL…MENK), and 331-364 (DELS…EQKM).

This sequence belongs to the Rap family.

Its subcellular location is the cytoplasm. Its activity is regulated as follows. Inhibited by PhrK, which prevents RapK-ComA interaction. In terms of biological role, involved in the regulation of genetic competence development. Inhibits the activity of ComA, a transcriptional factor that regulates the development of genetic competence. Likely affects the activity of additional regulators, in particular Spo0A. The chain is Regulatory protein RapK (rapK) from Bacillus subtilis (strain 168).